The chain runs to 724 residues: Probable methyltransferase PMT28 (724 aa).

At 1-22 (MMERKREMGIAYFARRIKQPRG) the chain is on the cytoplasmic side. The helical; Signal-anchor for type II membrane protein transmembrane segment at 23-43 (IWVKMTFIVVLGLCFVFFWSF) threads the bilayer. The Lumenal portion of the chain corresponds to 44–724 (LSSSASTFNV…LCAQKTLWRP (681 aa)). The tract at residues 63-211 (EPVSSRTKSA…ISKKRKRKGP (149 aa)) is disordered. The segment covering 71-98 (SAHEVSESSKLHERGKVESGSKSKEGKK) has biased composition (basic and acidic residues). The segment covering 107–125 (HETKKKKEHAVSHPHKKKD) has biased composition (basic residues). Residues 126–140 (VPKPVVEEVVVKEDQ) show a composition bias toward basic and acidic residues. The segment covering 141–173 (EHEEAESDDSDQSNKEDGEEGTESDGNEGESDG) has biased composition (acidic residues). N-linked (GlcNAc...) asparagine glycosylation is found at N305, N316, and N568.

The protein belongs to the methyltransferase superfamily.

It is found in the golgi apparatus membrane. The chain is Probable methyltransferase PMT28 from Arabidopsis thaliana (Mouse-ear cress).